A 365-amino-acid polypeptide reads, in one-letter code: MQTRRVVLKSAAAAGTLLGGLAGCASVAGSIGTGDRINTVRGPITISEAGFTLTHEHICGSSAGFLRAWPEFFGSRKALAEKAVRGLRRARAAGVRTIVDVSTFDIGRDVSLLAEVSRAADVHIVAATGLWFDPPLSMRLRSVEELTQFFLREIQYGIEDTGIRAGIIKVATTGKATPFQELVLKAAARASLATGVPVTTHTAASQRDGEQQAAIFESEGLSPSRVCIGHSDDTDDLSYLTALAARGYLIGLDHIPHSAIGLEDNASASALLGIRSWQTRALLIKALIDQGYMKQILVSNDWLFGFSSYVTNIMDVMDRVNPDGMAFIPLRVIPFLREKGVPQETLAGITVTNPARFLSPTLRAS.

Residues 1-29 (MQTRRVVLKSAAAAGTLLGGLAGCASVAG) constitute a signal peptide (tat-type signal). 6 residues coordinate Zn(2+): histidine 55, histidine 57, lysine 169, histidine 201, histidine 230, and aspartate 301. Residue lysine 169 is modified to N6-carboxylysine.

It belongs to the metallo-dependent hydrolases superfamily. Phosphotriesterase family. Homodimer. Zn(2+) serves as cofactor. Post-translationally, predicted to be exported by the Tat system. The position of the signal peptide cleavage has been experimentally proven.

The protein resides in the cell membrane. It carries out the reaction An aryl dialkyl phosphate + H2O = dialkyl phosphate + an aryl alcohol.. Functionally, has an unusual substrate specificity for synthetic organophosphate triesters and phosphorofluoridates. All of the phosphate triesters found to be substrates are synthetic compounds. The identity of any naturally occurring substrate for the enzyme is unknown. Has no detectable activity with phosphate monoesters or diesters and no activity as an esterase or protease. It catalyzes the hydrolysis of the insecticide paraoxon at a rate approaching the diffusion limit and thus appears to be optimally evolved for utilizing this synthetic substrate. The chain is Parathion hydrolase (opd) from Brevundimonas diminuta (Pseudomonas diminuta).